Consider the following 321-residue polypeptide: MLSVDYENFDLISYLYNLVRQIPDGMVSTYGDLAEALGDPVAARSVGFMLSINKEPDYIPCYKVVPHDGSVGNYTHPLGSAEKMRRLIRDGITITNGHISNFEKVRFREFKTDYPLRKLRELQFKIGRLYDDRNDYSLDTIAAFDVSYKETRGYASKVVYNKGKIGAYVYSSDSMFPYIPGYLAFKEFKFIRALYDNETMILIDGNGILHPRFAGLATHAGVSLKTASIGIAKHLINCTVKGSDLLISGVVAGKMIGHHTIVSPGNRINVEEAGRLIEQREGKEMRSLLRLAHNLTRLHIETNGNIARYDFSTRNTAIQSS.

Residues 1 to 86 form a probable methylated-DNA--protein-cysteine methyltransferase region; the sequence is MLSVDYENFD…PLGSAEKMRR (86 aa). C61 is an active-site residue. The endonuclease V stretch occupies residues 87–318; the sequence is LIRDGITITN…YDFSTRNTAI (232 aa). Residues D145 and D204 each coordinate Mg(2+).

The protein in the N-terminal section; belongs to the MGMT family. It in the C-terminal section; belongs to the endonuclease V family. The cofactor is Mg(2+).

The protein localises to the cytoplasm. It catalyses the reaction Endonucleolytic cleavage at apurinic or apyrimidinic sites to products with a 5'-phosphate.. DNA repair enzyme involved in the repair of deaminated bases. Selectively cleaves double-stranded DNA at the second phosphodiester bond 3' to a deoxyinosine leaving behind the intact lesion on the nicked DNA. This chain is Bifunctional methyltransferase/endonuclease, found in Thermoplasma volcanium (strain ATCC 51530 / DSM 4299 / JCM 9571 / NBRC 15438 / GSS1).